We begin with the raw amino-acid sequence, 336 residues long: Ribosomal RNA small subunit methyltransferase C (336 aa).

The protein belongs to the methyltransferase superfamily. RsmC family. In terms of assembly, monomer.

The protein localises to the cytoplasm. The catalysed reaction is guanosine(1207) in 16S rRNA + S-adenosyl-L-methionine = N(2)-methylguanosine(1207) in 16S rRNA + S-adenosyl-L-homocysteine + H(+). Specifically methylates the guanine in position 1207 of 16S rRNA in the 30S particle. The polypeptide is Ribosomal RNA small subunit methyltransferase C (Hamiltonella defensa subsp. Acyrthosiphon pisum (strain 5AT)).